The chain runs to 131 residues: Small ribosomal subunit protein uS11 (131 aa).

The protein belongs to the universal ribosomal protein uS11 family. In terms of assembly, part of the 30S ribosomal subunit. Interacts with proteins S7 and S18. Binds to IF-3.

Located on the platform of the 30S subunit, it bridges several disparate RNA helices of the 16S rRNA. Forms part of the Shine-Dalgarno cleft in the 70S ribosome. The chain is Small ribosomal subunit protein uS11 from Bacillus licheniformis (strain ATCC 14580 / DSM 13 / JCM 2505 / CCUG 7422 / NBRC 12200 / NCIMB 9375 / NCTC 10341 / NRRL NRS-1264 / Gibson 46).